We begin with the raw amino-acid sequence, 353 residues long: Ribosomal RNA large subunit methyltransferase M (353 aa).

S-adenosyl-L-methionine contacts are provided by residues serine 183, 216-219 (APGG), aspartate 235, aspartate 255, and aspartate 271. Catalysis depends on lysine 300, which acts as the Proton acceptor.

This sequence belongs to the class I-like SAM-binding methyltransferase superfamily. RNA methyltransferase RlmE family. RlmM subfamily. In terms of assembly, monomer.

The protein resides in the cytoplasm. It carries out the reaction cytidine(2498) in 23S rRNA + S-adenosyl-L-methionine = 2'-O-methylcytidine(2498) in 23S rRNA + S-adenosyl-L-homocysteine + H(+). Catalyzes the 2'-O-methylation at nucleotide C2498 in 23S rRNA. The polypeptide is Ribosomal RNA large subunit methyltransferase M (Azotobacter vinelandii (strain DJ / ATCC BAA-1303)).